We begin with the raw amino-acid sequence, 190 residues long: ATP synthase subunit b 1 (190 aa).

Residues 35–55 (DFVVLLGFLLFLAILFYFGVP) traverse the membrane as a helical segment.

This sequence belongs to the ATPase B chain family. In terms of assembly, F-type ATPases have 2 components, F(1) - the catalytic core - and F(0) - the membrane proton channel. F(1) has five subunits: alpha(3), beta(3), gamma(1), delta(1), epsilon(1). F(0) has three main subunits: a(1), b(2) and c(10-14). The alpha and beta chains form an alternating ring which encloses part of the gamma chain. F(1) is attached to F(0) by a central stalk formed by the gamma and epsilon chains, while a peripheral stalk is formed by the delta and b chains.

The protein resides in the cell inner membrane. Its function is as follows. F(1)F(0) ATP synthase produces ATP from ADP in the presence of a proton or sodium gradient. F-type ATPases consist of two structural domains, F(1) containing the extramembraneous catalytic core and F(0) containing the membrane proton channel, linked together by a central stalk and a peripheral stalk. During catalysis, ATP synthesis in the catalytic domain of F(1) is coupled via a rotary mechanism of the central stalk subunits to proton translocation. Component of the F(0) channel, it forms part of the peripheral stalk, linking F(1) to F(0). The chain is ATP synthase subunit b 1 from Jannaschia sp. (strain CCS1).